A 1087-amino-acid polypeptide reads, in one-letter code: Exoglucanase XynX (1087 aa).

The first 30 residues, 1–30 (MKNNLSKFVSIFTAFIMIFGTSLFFPHVSA), serve as a signal peptide directing secretion. The CBM-cenC domain occupies 37–188 (ANLVSNGDFE…YIDDVVVTPQ (152 aa)). A GH10 domain is found at 204–527 (QNDIPDLSSV…KPAYWAIADP (324 aa)). Glutamate 347 serves as the catalytic Proton donor. Aspartate 389 is an active-site residue. Residue glutamate 452 is the Nucleophile of the active site. SLH domains lie at 903 to 966 (KKSV…YNGE), 967 to 1025 (FSDV…KEEN), and 1028 to 1087 (ATSF…SNNL).

This sequence belongs to the glycosyl hydrolase 10 (cellulase F) family.

The catalysed reaction is Hydrolysis of (1-&gt;4)-beta-D-glucosidic linkages in cellulose and cellotetraose, releasing cellobiose from the non-reducing ends of the chains.. The polypeptide is Exoglucanase XynX (xynX) (Acetivibrio thermocellus (Hungateiclostridium thermocellum)).